We begin with the raw amino-acid sequence, 1487 residues long: Chromosome partition protein MukB (1487 aa).

Glycine 34 to serine 41 provides a ligand contact to ATP. Coiled coils occupy residues serine 297–alanine 426, alanine 460–serine 666, arginine 781–alanine 806, glutamate 836–valine 1111, and valine 1210–isoleucine 1266. The flexible hinge stretch occupies residues proline 667–arginine 784.

It belongs to the SMC family. MukB subfamily. Homodimerization via its hinge domain. Binds to DNA via its C-terminal region. Interacts, and probably forms a ternary complex, with MukE and MukF via its C-terminal region. The complex formation is stimulated by calcium or magnesium. Interacts with tubulin-related protein FtsZ.

It localises to the cytoplasm. Its subcellular location is the nucleoid. Functionally, plays a central role in chromosome condensation, segregation and cell cycle progression. Functions as a homodimer, which is essential for chromosome partition. Involved in negative DNA supercoiling in vivo, and by this means organize and compact chromosomes. May achieve or facilitate chromosome segregation by condensation DNA from both sides of a centrally located replisome during cell division. This chain is Chromosome partition protein MukB, found in Vibrio vulnificus (strain YJ016).